Here is a 316-residue protein sequence, read N- to C-terminus: ATP synthase gamma chain (316 aa).

The protein belongs to the ATPase gamma chain family. In terms of assembly, F-type ATPases have 2 components, CF(1) - the catalytic core - and CF(0) - the membrane proton channel. CF(1) has five subunits: alpha(3), beta(3), gamma(1), delta(1), epsilon(1). CF(0) has three main subunits: a, b and c.

It is found in the cellular thylakoid membrane. Functionally, produces ATP from ADP in the presence of a proton gradient across the membrane. The gamma chain is believed to be important in regulating ATPase activity and the flow of protons through the CF(0) complex. The chain is ATP synthase gamma chain from Prochlorococcus marinus (strain MIT 9215).